Here is a 212-residue protein sequence, read N- to C-terminus: Peptide methionine sulfoxide reductase MsrA (212 aa).

The active site involves C52.

The protein belongs to the MsrA Met sulfoxide reductase family.

It carries out the reaction L-methionyl-[protein] + [thioredoxin]-disulfide + H2O = L-methionyl-(S)-S-oxide-[protein] + [thioredoxin]-dithiol. The enzyme catalyses [thioredoxin]-disulfide + L-methionine + H2O = L-methionine (S)-S-oxide + [thioredoxin]-dithiol. Has an important function as a repair enzyme for proteins that have been inactivated by oxidation. Catalyzes the reversible oxidation-reduction of methionine sulfoxide in proteins to methionine. The chain is Peptide methionine sulfoxide reductase MsrA from Shigella dysenteriae serotype 1 (strain Sd197).